Here is a 353-residue protein sequence, read N- to C-terminus: UPF0283 membrane protein YcjF (353 aa).

Residues 1 to 19 show a composition bias toward basic and acidic residues; sequence MSEPLKPRIDFAEPLKEEP. The segment at 1-35 is disordered; that stretch reads MSEPLKPRIDFAEPLKEEPTSAFKAQQTFSEAESR. 3 helical membrane passes run 70-90, 100-120, and 213-233; these read MVMG…IQWT, VALG…GSVV, and ESTL…FIAW.

It belongs to the UPF0283 family.

It localises to the cell inner membrane. The polypeptide is UPF0283 membrane protein YcjF (Salmonella agona (strain SL483)).